A 75-amino-acid polypeptide reads, in one-letter code: DNA-directed RNA polymerase subunit omega (75 aa).

This sequence belongs to the RNA polymerase subunit omega family. In cyanobacteria the RNAP catalytic core is composed of 2 alpha, 1 beta, 1 beta', 1 gamma and 1 omega subunit. When a sigma factor is associated with the core the holoenzyme is formed, which can initiate transcription.

The catalysed reaction is RNA(n) + a ribonucleoside 5'-triphosphate = RNA(n+1) + diphosphate. Promotes RNA polymerase assembly. Latches the N- and C-terminal regions of the beta' subunit thereby facilitating its interaction with the beta and alpha subunits. This Synechococcus sp. (strain CC9311) protein is DNA-directed RNA polymerase subunit omega.